Consider the following 103-residue polypeptide: Small ribosomal subunit protein uS10 (103 aa).

This sequence belongs to the universal ribosomal protein uS10 family. Part of the 30S ribosomal subunit.

In terms of biological role, involved in the binding of tRNA to the ribosomes. In Chlorobium luteolum (strain DSM 273 / BCRC 81028 / 2530) (Pelodictyon luteolum), this protein is Small ribosomal subunit protein uS10.